Consider the following 300-residue polypeptide: 4-hydroxy-tetrahydrodipicolinate synthase (300 aa).

Residue threonine 45 participates in pyruvate binding. Tyrosine 140 (proton donor/acceptor) is an active-site residue. Lysine 169 acts as the Schiff-base intermediate with substrate in catalysis. Valine 210 is a binding site for pyruvate.

Belongs to the DapA family. In terms of assembly, homotetramer; dimer of dimers.

The protein resides in the cytoplasm. It catalyses the reaction L-aspartate 4-semialdehyde + pyruvate = (2S,4S)-4-hydroxy-2,3,4,5-tetrahydrodipicolinate + H2O + H(+). The protein operates within amino-acid biosynthesis; L-lysine biosynthesis via DAP pathway; (S)-tetrahydrodipicolinate from L-aspartate: step 3/4. Functionally, catalyzes the condensation of (S)-aspartate-beta-semialdehyde [(S)-ASA] and pyruvate to 4-hydroxy-tetrahydrodipicolinate (HTPA). The protein is 4-hydroxy-tetrahydrodipicolinate synthase of Helicobacter acinonychis (strain Sheeba).